Here is a 303-residue protein sequence, read N- to C-terminus: Pycsar effector protein BcPycTIR (303 aa).

22-138 (KLVGGDKGLA…RRMAKELSKR (117 aa)) serves as a coordination point for a nucleoside 3',5'-cyclic phosphate. A TIR-like region spans residues 154-273 (RVFVISSAEA…DMAGVTTIPY (120 aa)).

In terms of assembly, purified protein forms large 2-dimensional sheets when incubated with cUMP and shorter filaments in the presence of cCMP.

It is found in the cytoplasm. It carries out the reaction NAD(+) + H2O = ADP-D-ribose + nicotinamide + H(+). Activated by cyclic UMP (cUMP) and to a lesser extent by cCMP. Functionally, pycsar (pyrimidine cyclase system for antiphage resistance) provides immunity against bacteriophage. The pyrimidine cyclase (PycC) synthesizes cyclic nucleotides in response to infection; these serve as specific second messenger signals. The signals activate the adjacent effector, leading to bacterial cell death and abortive phage infection. A clade B Pycsar system. The effector protein of a two-gene Pycsar system. Upon activation by cyclic UMP (cUMP) degrades cellular NAD(+). Expression of this and adjacent uridylate cyclase BcPycC (AC A0A0J5ZXG5) probably confers resistance to bacteriophage. The genes are probably only expressed in response to bacteriophage infection. This protein probably only responds to cUMP (produced by its cognate NTP cyclase). The protein is Pycsar effector protein BcPycTIR of Burkholderia cepacia (Pseudomonas cepacia).